Reading from the N-terminus, the 698-residue chain is Dual trans-enoyl reductase/FAD-dependent monooxygenase tazHJ (698 aa).

NADP(+) contacts are provided by residues 54-57 (STAT), 78-81 (SPRH), Tyr96, and 279-280 (IA). FAD-binding residues include Glu299, Gly312, and Arg372. Arg455 is an active-site residue. FAD is bound by residues Asp571 and Ala584.

In the N-terminal section; belongs to the zinc-containing alcohol dehydrogenase family. The protein in the C-terminal section; belongs to the paxM FAD-dependent monooxygenase family.

The protein operates within secondary metabolite biosynthesis. Dual trans-enoyl reductase/FAD-dependent monooxygenase; part of the gene cluster that mediates the biosynthesis of azaterrilone A and other azaphilones, a class of fungal metabolites characterized by a highly oxygenated pyrano-quinone bicyclic core and exhibiting a broad range of bioactivities. The first step of the pathway begins with the non-reducing polyketide synthase tazA that assembles one acetyl-CoA starter unit, five malonyl-CoA units, and catalyzes a series of Claisen condensations, methylation, PT-mediated cyclization, and finally releases the first hexaketide precursor through the R-domain. The tazA product then undergoes reduction on its terminal ketone and the following pyran-ring formation by yet undetermined enzyme(s). Dehydration and enoyl reduction, possibly involving the trans-enoyl reductase tazE leads to the next intermediate. TazD is predicted as an acetyltransferase and might catalyze the acetylation steps leading to the synthesis of azaterrilone A. Azaterrilone A is not the final product of the taz pathway and both the highly reducing polyketide synthase tazB and the dual enzyme tazHJ catalyze late steps of the pathway, leading to the production of the 2 final stereoisomers that contain additional polyketide modification whose structures have still to be determined. In Aspergillus terreus (strain NIH 2624 / FGSC A1156), this protein is Dual trans-enoyl reductase/FAD-dependent monooxygenase tazHJ.